The following is a 1026-amino-acid chain: Beta-galactosidase (1026 aa).

Substrate-binding residues include asparagine 104 and aspartate 203. Residue aspartate 203 coordinates Na(+). The Mg(2+) site is built by glutamate 418, histidine 420, and glutamate 463. Substrate is bound by residues glutamate 463 and 539–542; that span reads EYAH. The Proton donor role is filled by glutamate 463. Residue glutamate 539 is the Nucleophile of the active site. Asparagine 599 is a Mg(2+) binding site. Na(+) is bound by residues phenylalanine 603 and asparagine 606. 2 residues coordinate substrate: asparagine 606 and tryptophan 1002.

This sequence belongs to the glycosyl hydrolase 2 family. As to quaternary structure, homotetramer. Mg(2+) serves as cofactor. Requires Na(+) as cofactor.

It catalyses the reaction Hydrolysis of terminal non-reducing beta-D-galactose residues in beta-D-galactosides.. The protein is Beta-galactosidase of Erwinia tasmaniensis (strain DSM 17950 / CFBP 7177 / CIP 109463 / NCPPB 4357 / Et1/99).